The sequence spans 148 residues: uncharacterized protein (148 aa).

Residues Met-1 to Gly-16 form the signal peptide. An N-linked (GlcNAc...) asparagine glycan is attached at Asn-50. Residues Met-91 to Met-125 form a disordered region. Positions Pro-96–Pro-116 are enriched in low complexity.

The protein resides in the secreted. This is an uncharacterized protein from Mus musculus (Mouse).